Reading from the N-terminus, the 752-residue chain is Catalase-peroxidase (752 aa).

The interval 1–20 is disordered; sequence MENELVSKVKAPVPGNQTNT. A cross-link (tryptophyl-tyrosyl-methioninium (Trp-Tyr) (with M-260)) is located at residues 111–234; that stretch reads WHSAGTYRIG…LGAVQMGLIY (124 aa). Histidine 112 (proton acceptor) is an active-site residue. The tryptophyl-tyrosyl-methioninium (Tyr-Met) (with W-111) cross-link spans 234–260; that stretch reads YVNPEGPNGKPDPAAAAVDIRETFARM. Histidine 275 is a binding site for heme b.

Belongs to the peroxidase family. Peroxidase/catalase subfamily. Homodimer or homotetramer. It depends on heme b as a cofactor. Post-translationally, formation of the three residue Trp-Tyr-Met cross-link is important for the catalase, but not the peroxidase activity of the enzyme.

It catalyses the reaction H2O2 + AH2 = A + 2 H2O. The enzyme catalyses 2 H2O2 = O2 + 2 H2O. Its function is as follows. Bifunctional enzyme with both catalase and broad-spectrum peroxidase activity. This Koribacter versatilis (strain Ellin345) protein is Catalase-peroxidase.